Here is a 212-residue protein sequence, read N- to C-terminus: 3,4-dihydroxy-2-butanone 4-phosphate synthase (212 aa).

D-ribulose 5-phosphate-binding positions include 37–38 (RE), D42, 150–154 (RRGHT), and E174. E38 serves as a coordination point for Mg(2+). Mg(2+) is bound at residue H153.

The protein belongs to the DHBP synthase family. As to quaternary structure, homodimer. Mg(2+) is required as a cofactor. It depends on Mn(2+) as a cofactor.

It carries out the reaction D-ribulose 5-phosphate = (2S)-2-hydroxy-3-oxobutyl phosphate + formate + H(+). It functions in the pathway cofactor biosynthesis; riboflavin biosynthesis; 2-hydroxy-3-oxobutyl phosphate from D-ribulose 5-phosphate: step 1/1. Functionally, catalyzes the conversion of D-ribulose 5-phosphate to formate and 3,4-dihydroxy-2-butanone 4-phosphate. The polypeptide is 3,4-dihydroxy-2-butanone 4-phosphate synthase (Shewanella halifaxensis (strain HAW-EB4)).